Reading from the N-terminus, the 128-residue chain is Large ribosomal subunit protein eL8 (128 aa).

The protein belongs to the eukaryotic ribosomal protein eL8 family. As to quaternary structure, part of the 50S ribosomal subunit. Probably part of the RNase P complex.

The protein resides in the cytoplasm. Functionally, multifunctional RNA-binding protein that recognizes the K-turn motif in ribosomal RNA, the RNA component of RNase P, box H/ACA, box C/D and box C'/D' sRNAs. This Nitrosopumilus maritimus (strain SCM1) protein is Large ribosomal subunit protein eL8.